Consider the following 228-residue polypeptide: DNA-binding response regulator MtrA (228 aa).

Residues R7–L120 form the Response regulatory domain. D56 bears the 4-aspartylphosphate mark. Residues A128–P227 constitute a DNA-binding region (ompR/PhoB-type).

Post-translationally, phosphorylated by MtrB.

Functionally, member of the two-component regulatory system MtrA/MtrB. In Mycobacterium bovis (strain ATCC BAA-935 / AF2122/97), this protein is DNA-binding response regulator MtrA (mtrA).